The chain runs to 197 residues: Probable nicotinate-nucleotide adenylyltransferase (197 aa).

Belongs to the NadD family.

The catalysed reaction is nicotinate beta-D-ribonucleotide + ATP + H(+) = deamido-NAD(+) + diphosphate. It participates in cofactor biosynthesis; NAD(+) biosynthesis; deamido-NAD(+) from nicotinate D-ribonucleotide: step 1/1. Catalyzes the reversible adenylation of nicotinate mononucleotide (NaMN) to nicotinic acid adenine dinucleotide (NaAD). This is Probable nicotinate-nucleotide adenylyltransferase from Leptospira borgpetersenii serovar Hardjo-bovis (strain JB197).